Consider the following 243-residue polypeptide: Probable transcriptional regulatory protein BG0025 (243 aa).

The protein belongs to the TACO1 family.

It localises to the cytoplasm. The protein is Probable transcriptional regulatory protein BG0025 of Borrelia garinii subsp. bavariensis (strain ATCC BAA-2496 / DSM 23469 / PBi) (Borreliella bavariensis).